Here is a 300-residue protein sequence, read N- to C-terminus: UDP-3-O-acyl-N-acetylglucosamine deacetylase (300 aa).

The Zn(2+) site is built by His-78, His-237, and Asp-241. His-264 serves as the catalytic Proton donor.

Belongs to the LpxC family. It depends on Zn(2+) as a cofactor.

It carries out the reaction a UDP-3-O-[(3R)-3-hydroxyacyl]-N-acetyl-alpha-D-glucosamine + H2O = a UDP-3-O-[(3R)-3-hydroxyacyl]-alpha-D-glucosamine + acetate. Its pathway is glycolipid biosynthesis; lipid IV(A) biosynthesis; lipid IV(A) from (3R)-3-hydroxytetradecanoyl-[acyl-carrier-protein] and UDP-N-acetyl-alpha-D-glucosamine: step 2/6. Catalyzes the hydrolysis of UDP-3-O-myristoyl-N-acetylglucosamine to form UDP-3-O-myristoylglucosamine and acetate, the committed step in lipid A biosynthesis. This chain is UDP-3-O-acyl-N-acetylglucosamine deacetylase, found in Acinetobacter baumannii (strain SDF).